The following is a 539-amino-acid chain: Trigger factor (539 aa).

The 90-residue stretch at 163 to 252 (GDQLTVQIET…VLDVQERLLP (90 aa)) folds into the PPIase FKBP-type domain. 2 stretches are compositionally biased toward low complexity: residues 434–447 (SFEQAASPEAASEP) and 475–484 (AASPEAASEP). The interval 434 to 539 (SFEQAASPEA…DVATPEARTE (106 aa)) is disordered. Over residues 509–528 (TETPIVSQEENGESVENQSV) the composition is skewed to polar residues.

Belongs to the FKBP-type PPIase family. Tig subfamily.

The protein resides in the cytoplasm. The catalysed reaction is [protein]-peptidylproline (omega=180) = [protein]-peptidylproline (omega=0). In terms of biological role, involved in protein export. Acts as a chaperone by maintaining the newly synthesized protein in an open conformation. Functions as a peptidyl-prolyl cis-trans isomerase. The polypeptide is Trigger factor (Roseiflexus sp. (strain RS-1)).